Consider the following 529-residue polypeptide: Scarecrow-like protein 13 (529 aa).

Residues 51–81 show a composition bias toward polar residues; sequence ASGSLPSYDSPSVSITSGRSPFSPQGSQSCI. The tract at residues 51–84 is disordered; the sequence is ASGSLPSYDSPSVSITSGRSPFSPQGSQSCISDL. A GRAS domain is found at 146–525; it reads LLALTPQLDL…RPMATCSVWK (380 aa). The segment at 153-213 is leucine repeat I (LRI); that stretch reads LDLKEVLVEA…RARLEGSGSN (61 aa). The tract at residues 232 to 297 is VHIID; the sequence is MSVLYEICPY…GGPPLLRVTG (66 aa). Positions 263–267 match the VHIID motif; the sequence is VHIID. Positions 313–345 are leucine repeat II (LRII); it reads LVGERLATLAQSCGVPFEFHDAIMSGCKVQREH. Positions 354–448 are PFYRE; sequence VVVNFPYVLH…QHCVARDIVN (95 aa). Positions 451-525 are SAW; it reads ACEESERVER…RPMATCSVWK (75 aa).

This sequence belongs to the GRAS family. As to expression, expressed in roots, hypocotyls, cotyledons, shoot apex, leaves, flowers and siliques.

It localises to the cytoplasm. Its subcellular location is the nucleus. Its function is as follows. Probable transcription factor that acts as a positive regulator of continuous red light signals downstream of phytochrome B (phyB). Required for the regulation of hypocotyl elongation during de-etiolation. May be required to modulate phytochrome A (phyA) signal transduction in a phyB-independent way. The sequence is that of Scarecrow-like protein 13 (SCL13) from Arabidopsis thaliana (Mouse-ear cress).